The primary structure comprises 91 residues: Aspartyl/glutamyl-tRNA(Asn/Gln) amidotransferase subunit C (91 aa).

The interval 68-91 (LDQDDALANAPETEDGRFKGPNVS) is disordered.

It belongs to the GatC family. In terms of assembly, heterotrimer of A, B and C subunits.

The enzyme catalyses L-glutamyl-tRNA(Gln) + L-glutamine + ATP + H2O = L-glutaminyl-tRNA(Gln) + L-glutamate + ADP + phosphate + H(+). The catalysed reaction is L-aspartyl-tRNA(Asn) + L-glutamine + ATP + H2O = L-asparaginyl-tRNA(Asn) + L-glutamate + ADP + phosphate + 2 H(+). In terms of biological role, allows the formation of correctly charged Asn-tRNA(Asn) or Gln-tRNA(Gln) through the transamidation of misacylated Asp-tRNA(Asn) or Glu-tRNA(Gln) in organisms which lack either or both of asparaginyl-tRNA or glutaminyl-tRNA synthetases. The reaction takes place in the presence of glutamine and ATP through an activated phospho-Asp-tRNA(Asn) or phospho-Glu-tRNA(Gln). This Halobacterium salinarum (strain ATCC 29341 / DSM 671 / R1) protein is Aspartyl/glutamyl-tRNA(Asn/Gln) amidotransferase subunit C.